Here is a 493-residue protein sequence, read N- to C-terminus: Alcohol-forming fatty acyl-CoA reductase (493 aa).

It belongs to the fatty acyl-CoA reductase family.

It catalyses the reaction a long-chain fatty acyl-CoA + 2 NADPH + 2 H(+) = a long-chain primary fatty alcohol + 2 NADP(+) + CoA. Functionally, NADPH-dependent alcohol-forming fatty acyl-coenzyme A reductase that catalyzes the reduction of fatty acyl-CoA to fatty alcohols. The recombinant enzyme accepts saturated and mono-unsaturated fatty acyl-CoAs of 16 to 22 carbons. The polypeptide is Alcohol-forming fatty acyl-CoA reductase (Simmondsia chinensis (Jojoba)).